An 840-amino-acid polypeptide reads, in one-letter code: Sorting nexin-25 (840 aa).

One can recognise a PXA domain in the interval 1–164 (MDKALKEVFD…MLLAQLAYRE (164 aa)). The region spanning 287–401 (QFEDILANTF…IVSDLYEKLL (115 aa)) is the RGS domain. Residues 434 to 499 (TNQINEQASF…RTDLQLHMAR (66 aa)) are a coiled coil. The PX domain occupies 508–628 (GMWKASITSG…AFLSPSPDYL (121 aa)). The residue at position 665 (Ser665) is a Phosphoserine.

The protein belongs to the sorting nexin family.

The protein resides in the endosome membrane. Functionally, may be involved in several stages of intracellular trafficking. This Homo sapiens (Human) protein is Sorting nexin-25 (SNX25).